The primary structure comprises 298 residues: Homoserine kinase (298 aa).

Position 83–93 (83–93 (PVSRGLGSSST)) interacts with ATP.

Belongs to the GHMP kinase family. Homoserine kinase subfamily.

The protein localises to the cytoplasm. The catalysed reaction is L-homoserine + ATP = O-phospho-L-homoserine + ADP + H(+). Its pathway is amino-acid biosynthesis; L-threonine biosynthesis; L-threonine from L-aspartate: step 4/5. Catalyzes the ATP-dependent phosphorylation of L-homoserine to L-homoserine phosphate. The protein is Homoserine kinase of Clostridium beijerinckii (strain ATCC 51743 / NCIMB 8052) (Clostridium acetobutylicum).